A 308-amino-acid polypeptide reads, in one-letter code: Aspartate carbamoyltransferase catalytic subunit (308 aa).

Carbamoyl phosphate-binding residues include arginine 57 and threonine 58. An L-aspartate-binding site is contributed by lysine 86. Residues arginine 107, histidine 135, and glutamine 138 each contribute to the carbamoyl phosphate site. Arginine 168 and arginine 229 together coordinate L-aspartate. Carbamoyl phosphate-binding residues include leucine 268 and proline 269.

The protein belongs to the aspartate/ornithine carbamoyltransferase superfamily. ATCase family. As to quaternary structure, heterooligomer of catalytic and regulatory chains.

It catalyses the reaction carbamoyl phosphate + L-aspartate = N-carbamoyl-L-aspartate + phosphate + H(+). The protein operates within pyrimidine metabolism; UMP biosynthesis via de novo pathway; (S)-dihydroorotate from bicarbonate: step 2/3. Catalyzes the condensation of carbamoyl phosphate and aspartate to form carbamoyl aspartate and inorganic phosphate, the committed step in the de novo pyrimidine nucleotide biosynthesis pathway. The sequence is that of Aspartate carbamoyltransferase catalytic subunit from Pyrococcus horikoshii (strain ATCC 700860 / DSM 12428 / JCM 9974 / NBRC 100139 / OT-3).